A 177-amino-acid chain; its full sequence is Protein GrpE (177 aa).

This sequence belongs to the GrpE family. As to quaternary structure, homodimer. K(+) serves as cofactor.

Its subcellular location is the cytoplasm. Functionally, participates actively in the response to hyperosmotic and heat shock by preventing the aggregation of stress-denatured proteins, in association with DnaK and GrpE. It is the nucleotide exchange factor for DnaK and may function as a thermosensor. Unfolded proteins bind initially to DnaJ; upon interaction with the DnaJ-bound protein, DnaK hydrolyzes its bound ATP, resulting in the formation of a stable complex. GrpE releases ADP from DnaK; ATP binding to DnaK triggers the release of the substrate protein, thus completing the reaction cycle. Several rounds of ATP-dependent interactions between DnaJ, DnaK and GrpE are required for fully efficient folding. The chain is Protein GrpE from Thermus thermophilus (strain ATCC 27634 / DSM 579 / HB8).